Reading from the N-terminus, the 516-residue chain is Cytochrome P450 monooxygenase ntnM (516 aa).

The chain crosses the membrane as a helical span at residues 22–42 (IINVILSIAAIALIRALAISI). Cysteine 453 is a heme binding site.

Belongs to the cytochrome P450 family. Heme serves as cofactor.

The protein localises to the membrane. Its pathway is secondary metabolite biosynthesis; terpenoid biosynthesis. Its function is as follows. Cytochrome P450 monooxygenase; part of the gene cluster that mediates the biosynthesis of the meroterpenoids nectripenoids A and B, as well as cochliquninone D and isocochliquninone E. The pathway probably begins with the HR-PKS ntnH that catalyzes two chain-extension steps to form a reduced triketide, which then primes the SAT domain in the NR-PKS ntnG to initiate three more cycles of extension to give a linear hexaketide corresponding to the polyketide part of nectripenoids. The FAD-dependent monooxygenase ntnJ then performs an oxidative decarboxylation at C11 of the ntnH/ntnG product, via an electrophilic aromatic hydroxylation with concomitant ipso-decarboxylation. The membrane-bound polyprenyl transferase ntnF then introduces a farnesyl group before the FAD-dependent monooxygenase ntnK functions as the first epoxidase on terminal C12'-C13' olefin, followed by a second epoxidation on C7'-C8' catalyzed by ntnA. The terpene cyclase/mutase ntnI then initiates the sequential tricyclic ring formation through protonation of the terminal epoxide and catalyzes the regioselective and stereoselective 6/6/6-tricyclic ring formation. The cytochrome P450 monooxygenase ntnM may then hydroxylate C1'. The chain is Cytochrome P450 monooxygenase ntnM from Nectria sp.